The following is a 444-amino-acid chain: Trigger factor (444 aa).

The PPIase FKBP-type domain occupies 185 to 270 (GDKLIIDFEG…VNEIQIAKDF (86 aa)).

It belongs to the FKBP-type PPIase family. Tig subfamily.

The protein localises to the cytoplasm. The catalysed reaction is [protein]-peptidylproline (omega=180) = [protein]-peptidylproline (omega=0). Functionally, involved in protein export. Acts as a chaperone by maintaining the newly synthesized protein in an open conformation. Functions as a peptidyl-prolyl cis-trans isomerase. The sequence is that of Trigger factor from Wolbachia pipientis wMel.